Consider the following 465-residue polypeptide: Monocarboxylate transporter 4 (465 aa).

Topologically, residues 2 to 17 are cytoplasmic; it reads GGAVVDEGPTGVKAPD. Residues 18-38 form a helical membrane-spanning segment; it reads GGWGWAVLFGCFVITGFSYAF. At 39 to 61 the chain is on the extracellular side; the sequence is PKAVSVFFKELIQEFGIGYSDTA. Residues 62-82 form a helical membrane-spanning segment; that stretch reads WISSILLAMLYGTGPLCSVCV. Residues 83 to 84 are Cytoplasmic-facing; the sequence is NR. The chain crosses the membrane as a helical span at residues 85-105; the sequence is FGCRPVMLVGGLFASLGMVAA. Topologically, residues 106-109 are extracellular; sequence SFCR. Residues 110–130 traverse the membrane as a helical segment; that stretch reads SIIQVYLTTGVITGLGLALNF. Residues 131–149 are Cytoplasmic-facing; it reads QPSLIMLNRYFSKRRPMAN. The helical transmembrane segment at 150-170 threads the bilayer; it reads GLAAAGSPVFLCALSPLGQLL. Topologically, residues 171 to 179 are extracellular; it reads QDRYGWRGG. The helical transmembrane segment at 180–200 threads the bilayer; it reads FLILGGLLLNCCVCAALMRPL. The Cytoplasmic segment spans residues 201-227; that stretch reads VVTAQPGSGPPRPSRRLLDLSVFRDRG. Residues 228–248 traverse the membrane as a helical segment; the sequence is FVLYAVAASVMVLGLFVPPVF. Residues 249–264 are Extracellular-facing; it reads VVSYAKDLGVPDTKAA. A helical membrane pass occupies residues 265–285; sequence FLLTILGFIDIFARPAAGFVA. Residues 286–294 lie on the Cytoplasmic side of the membrane; it reads GLGKVRPYS. Residues 295–315 form a helical membrane-spanning segment; that stretch reads VYLFSFSMFFNGLADLAGSTA. The Extracellular portion of the chain corresponds to 316–317; that stretch reads GD. Residues 318–338 form a helical membrane-spanning segment; sequence YGGLVVFCIFFGISYGMVGAL. Over 339-351 the chain is Cytoplasmic; that stretch reads QFEVLMAIVGTHK. The helical transmembrane segment at 352-372 threads the bilayer; it reads FSSAIGLVLLMEAVAVLVGPP. The Extracellular portion of the chain corresponds to 373-384; the sequence is SGGKLLDATHVY. Residues 385 to 405 traverse the membrane as a helical segment; the sequence is MYVFILAGAEVLTSSLILLLG. The Cytoplasmic segment spans residues 406-465; sequence NFFCIRKKPKEPQPEVAAAEEEKLHKPPADSGVDLREVEHFLKAEPEKNGEVVHTPETSV. Residues 419-438 form a disordered region; sequence PEVAAAEEEKLHKPPADSGV. Basolateral sorting signal regions lie at residues 423–441 and 441–465; these read AAEEEKLHKPPADSGVDLR and REVEHFLKAEPEKNGEVVHTPETSV. The segment covering 425 to 438 has biased composition (basic and acidic residues); that stretch reads EEEKLHKPPADSGV. A Phosphoserine modification is found at S436. T460 is subject to Phosphothreonine. S464 is subject to Phosphoserine.

The protein belongs to the major facilitator superfamily. Monocarboxylate porter (TC 2.A.1.13) family. Interacts with BSG; interaction mediates SLC16A3 targeting to the plasma membrane. In terms of tissue distribution, highly expressed in skeletal muscle.

It is found in the cell membrane. It localises to the basolateral cell membrane. The enzyme catalyses (S)-lactate(in) + H(+)(in) = (S)-lactate(out) + H(+)(out). It carries out the reaction pyruvate(out) + H(+)(out) = pyruvate(in) + H(+)(in). In terms of biological role, proton-dependent transporter of monocarboxylates such as L-lactate and pyruvate. Plays a predominant role in L-lactate efflux from highly glycolytic cells. This Homo sapiens (Human) protein is Monocarboxylate transporter 4 (SLC16A3).